Here is a 672-residue protein sequence, read N- to C-terminus: Spermatid perinuclear RNA-binding protein (672 aa).

Residues 5 to 362 (RSFANDDRHV…ALKRPFEDGV (358 aa)) enclose the DZF domain. The disordered stretch occupies residues 348–370 (GTGSSALKRPFEDGVGDDKDPNK). The segment covering 356 to 370 (RPFEDGVGDDKDPNK) has biased composition (basic and acidic residues). The 67-residue stretch at 386–452 (DLMNALMRLN…AVKVLQAMGY (67 aa)) folds into the DRBM 1 domain. The segment at 463–494 (VSSDEKSDNEGKNETVSSISSNNTGNSTADTS) is disordered. Residues 465-475 (SDEKSDNEGKN) show a composition bias toward basic and acidic residues. Positions 477 to 490 (TVSSISSNNTGNST) are enriched in low complexity. The DRBM 2 domain maps to 509 to 575 (SGKNPVMELN…ALAALEKLFS (67 aa)).

It localises to the cytoplasm. In terms of biological role, may be involved in normal spermatogenesis and sperm function. Binds to double-stranded DNA and RNA. The polypeptide is Spermatid perinuclear RNA-binding protein (STRBP) (Gallus gallus (Chicken)).